Consider the following 98-residue polypeptide: Prostate and testis expressed protein 3 (98 aa).

The N-terminal stretch at 1 to 20 is a signal peptide; the sequence is MNKHFLLLFSLFYFIVEATS. Residues 21–97 form the UPAR/Ly6 domain; it reads LKCVTCHLRT…CCNSDFCNFR (77 aa). 4 disulfides stabilise this stretch: C23–C50, C26–C35, C42–C68, and C72–C88.

It belongs to the PATE family.

It localises to the secreted. In Mus musculus (Mouse), this protein is Prostate and testis expressed protein 3 (Pate3).